Reading from the N-terminus, the 56-residue chain is Ovomucoid (56 aa).

Positions 6 to 56 (VDCSEYPKPDCTTEERPLCGSDNKTYGNKCNFCNAVVESNGTLTLSHFGKC) constitute a Kazal-like domain. Cystine bridges form between cysteine 8–cysteine 38, cysteine 16–cysteine 35, and cysteine 24–cysteine 56. The N-linked (GlcNAc...) asparagine glycan is linked to asparagine 45.

Its subcellular location is the secreted. This is Ovomucoid from Francolinus pondicerianus (Grey francolin).